A 117-amino-acid chain; its full sequence is Large ribosomal subunit protein uL18 (117 aa).

The protein belongs to the universal ribosomal protein uL18 family. In terms of assembly, part of the 50S ribosomal subunit; part of the 5S rRNA/L5/L18/L25 subcomplex. Contacts the 5S and 23S rRNAs.

Its function is as follows. This is one of the proteins that bind and probably mediate the attachment of the 5S RNA into the large ribosomal subunit, where it forms part of the central protuberance. This chain is Large ribosomal subunit protein uL18, found in Aliivibrio fischeri (strain ATCC 700601 / ES114) (Vibrio fischeri).